The primary structure comprises 478 residues: NADH-quinone oxidoreductase subunit N (478 aa).

A run of 13 helical transmembrane segments spans residues 7 to 27 (SFIPAIPEIVLLTLTSLLLIA), 46 to 66 (ILLVVGYLVLTSFSTSQVLTF), 74 to 94 (AFGDILKLVIVVVSMGIFLFS), 109 to 129 (FTLGLFGVLGMFVMVSAYNLI), 163 to 183 (FVLGALATGMLLYGFSMIYGA), 204 to 224 (VVLSFGVVFIVIGLAFKLGAV), 237 to 257 (APTAVTLYIGTAPKIAAFAML), 273 to 293 (QSLIVMISVLSLIVGAVITLV), 300 to 320 (LLAYSGIGHIGFILLGIIAAN), 328 to 348 (MFYTIVYSITALAGFGMIVAL), 371 to 391 (LALMMLFIMFSMAGIPPFVGF), 405 to 425 (GFTWLAVLAVVMAVISAFYYL), and 451 to 471 (WAVSFVSIALLLLGLMPSSLI).

It belongs to the complex I subunit 2 family. NDH-1 is composed of 14 different subunits. Subunits NuoA, H, J, K, L, M, N constitute the membrane sector of the complex.

The protein localises to the cell inner membrane. The enzyme catalyses a quinone + NADH + 5 H(+)(in) = a quinol + NAD(+) + 4 H(+)(out). Functionally, NDH-1 shuttles electrons from NADH, via FMN and iron-sulfur (Fe-S) centers, to quinones in the respiratory chain. The immediate electron acceptor for the enzyme in this species is believed to be ubiquinone. Couples the redox reaction to proton translocation (for every two electrons transferred, four hydrogen ions are translocated across the cytoplasmic membrane), and thus conserves the redox energy in a proton gradient. In Hydrogenovibrio crunogenus (strain DSM 25203 / XCL-2) (Thiomicrospira crunogena), this protein is NADH-quinone oxidoreductase subunit N.